The chain runs to 374 residues: Tomoregulin-2 (374 aa).

Residues 1–40 form the signal peptide; sequence MVLWESPRQCSSWTLCEGFCWLLLLPVTLLIIARPVKLAA. The Extracellular portion of the chain corresponds to 41 to 320; it reads FPTSLSDCQT…VPGPVRFQYV (280 aa). N55 is a glycosylation site (N-linked (GlcNAc...) asparagine). 2 Kazal-like domains span residues 90–137 and 181–229; these read VCQF…SCAT and VCNI…RCQD. 6 disulfides stabilise this stretch: C91–C121, C95–C114, C103–C135, C182–C213, C186–C206, and C195–C227. N-linked (GlcNAc...) asparagine glycosylation occurs at N230. Residues 261–301 form the EGF-like domain; that stretch reads HHIPCPEHYNGFCMHGKCEHSINMQEPSCRCDAGYTGQHCE. 3 disulfide bridges follow: C265-C278, C273-C289, and C291-C300. The interval 303-320 is required for shedding; the sequence is KDYSVLYVVPGPVRFQYV. A helical membrane pass occupies residues 321–341; the sequence is LIAAVIGTIQIAVICVVVLCI. The Cytoplasmic portion of the chain corresponds to 342-374; it reads TRKCPRSNRIHRQKQNTGHYSSDNTTRASTRLI. Residues 353–374 form a disordered region; it reads RQKQNTGHYSSDNTTRASTRLI. Over residues 356-374 the composition is skewed to polar residues; sequence QNTGHYSSDNTTRASTRLI.

It belongs to the tomoregulin family. O-glycosylated; contains chondroitin sulfate glycosaminoglycans. Post-translationally, a soluble form (TMEFF2-ECD) is produced by proteolytic shedding. This shedding can be induced by phorbol ester or pro-inflammatory cytokines such as TNFalpha, and is mediated by a metalloproteinase ADAM. In terms of tissue distribution, widely expressed in the brain. In the olfactory bulb expressed in mitral cell, granule, and glomerular layers. In the hippocampus expressed in hippocampal cornu ammonis, pyramidal layer, dentate gyrus, and substantia nigra pars compacta.

Its subcellular location is the membrane. May be a survival factor for hippocampal and mesencephalic neurons. The shedded form may up-regulate cell proliferation. This Mus musculus (Mouse) protein is Tomoregulin-2 (Tmeff2).